We begin with the raw amino-acid sequence, 167 residues long: MQKANIDGKVWRFGKDIDTDLIIAARYLSTSVPEELAKHVMEDADPQFVKKMSSGDIIVAGENFGCGSSREHAPIALKAAGVAAVIAPTFARIFYRNAFNMGLPIFELQESAEIAEGDEISVDMNNGTITNKTSSKVYKFIPIPQFMQELIDAGGLMNFAQNEIKGK.

It belongs to the LeuD family. LeuD type 2 subfamily. Heterodimer of LeuC and LeuD.

It catalyses the reaction (2R,3S)-3-isopropylmalate = (2S)-2-isopropylmalate. It participates in amino-acid biosynthesis; L-leucine biosynthesis; L-leucine from 3-methyl-2-oxobutanoate: step 2/4. Its function is as follows. Catalyzes the isomerization between 2-isopropylmalate and 3-isopropylmalate, via the formation of 2-isopropylmaleate. This Sulfurimonas denitrificans (strain ATCC 33889 / DSM 1251) (Thiomicrospira denitrificans (strain ATCC 33889 / DSM 1251)) protein is 3-isopropylmalate dehydratase small subunit.